A 196-amino-acid polypeptide reads, in one-letter code: Putative AAA family ATPase L572 (196 aa).

An ATP-binding site is contributed by 32–39 (NAVNCKET).

This sequence belongs to the AAA ATPase family.

The sequence is that of Putative AAA family ATPase L572 from Acanthamoeba polyphaga mimivirus (APMV).